A 90-amino-acid chain; its full sequence is PIK3R3 upstream open reading frame protein (90 aa).

Residues 1-63 (MGPSQLVRAP…PASEATNISD (63 aa)) form a disordered region. A compositionally biased stretch (basic residues) spans 27–46 (PRRRCPSMFKCSRRTYRQKP). Polar residues predominate over residues 50–63 (TATNPASEATNISD).

The polypeptide is PIK3R3 upstream open reading frame protein (Mus musculus (Mouse)).